Here is a 181-residue protein sequence, read N- to C-terminus: MARRDVLLPFLLLLATVSAVAFAEDDPDCVYTFYLRTGSIWKAGTDSIISARIYDKDGDYIGIKNLQAWAGLMGPDYNYFERGNLDIFSGRAPCLPSPICALNLTSDGSGDHHGWYVNYVEITTAGVHAQCSTQDFEIEQWLATDTSPYELTAVRNNCPVKLRDSVSRVGSEIRKKLSWVV.

A signal peptide spans 1–14; sequence MARRDVLLPFLLLL. Ala15 carries the N-acetylalanine modification. The region spanning 29–156 is the PLAT domain; that stretch reads CVYTFYLRTG…SPYELTAVRN (128 aa).

In terms of tissue distribution, expressed in root tips, pericycle cells, lateral root primordia, stomata, leaf vasculature, hydathodes and floral organs.

The protein resides in the endoplasmic reticulum. Its subcellular location is the plastid. The protein localises to the chloroplast. It is found in the plastoglobule. Functionally, positive regulator of abiotic stress tolerance involved in the regulation of plant growth. May be a downstream target of the abscisic acid (ABA) signaling pathway. In Arabidopsis thaliana (Mouse-ear cress), this protein is PLAT domain-containing protein 1.